Reading from the N-terminus, the 373-residue chain is UDP-N-acetylglucosamine--N-acetylmuramyl-(pentapeptide) pyrophosphoryl-undecaprenol N-acetylglucosamine transferase (373 aa).

Residues 13–15, Asn124, Arg164, Ser192, and Gln293 contribute to the UDP-N-acetyl-alpha-D-glucosamine site; that span reads TGG.

This sequence belongs to the glycosyltransferase 28 family. MurG subfamily.

The protein resides in the cell inner membrane. It carries out the reaction di-trans,octa-cis-undecaprenyl diphospho-N-acetyl-alpha-D-muramoyl-L-alanyl-D-glutamyl-meso-2,6-diaminopimeloyl-D-alanyl-D-alanine + UDP-N-acetyl-alpha-D-glucosamine = di-trans,octa-cis-undecaprenyl diphospho-[N-acetyl-alpha-D-glucosaminyl-(1-&gt;4)]-N-acetyl-alpha-D-muramoyl-L-alanyl-D-glutamyl-meso-2,6-diaminopimeloyl-D-alanyl-D-alanine + UDP + H(+). Its pathway is cell wall biogenesis; peptidoglycan biosynthesis. Its function is as follows. Cell wall formation. Catalyzes the transfer of a GlcNAc subunit on undecaprenyl-pyrophosphoryl-MurNAc-pentapeptide (lipid intermediate I) to form undecaprenyl-pyrophosphoryl-MurNAc-(pentapeptide)GlcNAc (lipid intermediate II). This is UDP-N-acetylglucosamine--N-acetylmuramyl-(pentapeptide) pyrophosphoryl-undecaprenol N-acetylglucosamine transferase from Allorhizobium ampelinum (strain ATCC BAA-846 / DSM 112012 / S4) (Agrobacterium vitis (strain S4)).